A 199-amino-acid chain; its full sequence is Pyridoxine/pyridoxamine 5'-phosphate oxidase (199 aa).

Residues 44 to 49 (RTVLLK), 59 to 60 (YS), Lys-66, and Gln-91 contribute to the FMN site. Lys-49 lines the substrate pocket. Substrate is bound by residues Tyr-109, Arg-113, and Ser-117. FMN-binding positions include 126–127 (QS) and Trp-171. 177–179 (RLH) contributes to the substrate binding site. Arg-181 contributes to the FMN binding site.

The protein belongs to the pyridoxamine 5'-phosphate oxidase family. As to quaternary structure, homodimer. The cofactor is FMN.

It catalyses the reaction pyridoxamine 5'-phosphate + O2 + H2O = pyridoxal 5'-phosphate + H2O2 + NH4(+). The catalysed reaction is pyridoxine 5'-phosphate + O2 = pyridoxal 5'-phosphate + H2O2. Its pathway is cofactor metabolism; pyridoxal 5'-phosphate salvage; pyridoxal 5'-phosphate from pyridoxamine 5'-phosphate: step 1/1. The protein operates within cofactor metabolism; pyridoxal 5'-phosphate salvage; pyridoxal 5'-phosphate from pyridoxine 5'-phosphate: step 1/1. Its function is as follows. Catalyzes the oxidation of either pyridoxine 5'-phosphate (PNP) or pyridoxamine 5'-phosphate (PMP) into pyridoxal 5'-phosphate (PLP). In Xanthomonas oryzae pv. oryzae (strain KACC10331 / KXO85), this protein is Pyridoxine/pyridoxamine 5'-phosphate oxidase.